A 99-amino-acid chain; its full sequence is Plastocyanin (99 aa).

In terms of domain architecture, Plastocyanin-like spans 1–99 (VEILLGGEDG…AGMVGKVTVN (99 aa)). Positions 37, 84, 87, and 92 each coordinate Cu cation.

Belongs to the plastocyanin family. Requires Cu(2+) as cofactor.

The protein resides in the plastid. Its subcellular location is the chloroplast thylakoid membrane. In terms of biological role, participates in electron transfer between P700 and the cytochrome b6-f complex in photosystem I. The protein is Plastocyanin (PETE) of Sambucus nigra (European elder).